The primary structure comprises 600 residues: MASNHKSSAPRPISRGGIGLTGRPPSGIRPPSGNVRVATAMPPTTARPGSRGGPLGTGGVLSSQIKVADRPVTQQGLSGMKTGMKGPQRQILDKSYYLGLLRSKISELTTEINKLQKEIEMYNQENSVYLSYEKRAETLAVEIKDFQGQLADYNMLVDKLNTNTEMEEVMSDYNMLKAQNDRETQSMDVIFTERQAKEKQIRSVEEEVEQEKQAADGIIKNMSPEKQVKYIEMKTTNEKLLQELDTLQQQLDSLNMKKESLETEIAHSQVKQEAVLLYEKLYELESHRDQMIAEDKSMGSPMEERERLLKQVKEDNQEIASMERQLTDIKEKINQFSEEIRQLDMDLEEHQGEMNQKYKELKKREENMDAFIETFEETKNQELERKAQIEASIITLLEHCSRNINRMKQISSITNQELKMMQDDLSFKSTEMQKSQTTARNLTSDSQRLQLDLQKMELLESKMTEEQQSLKNKIKQMTADLETYSDLAALKSSAEEKKKKLHQERTVLSTHRNAFKKIMEKLTSDYDTLKRQLQDNETHAQLTNLERKWQHLEQNNFVMKEFIATKSQESDYQPVIKNVMKQIAEYNKTIMDALHNASRS.

The segment at 1 to 64 (MASNHKSSAP…LGTGGVLSSQ (64 aa)) is disordered. Residues 1 to 90 (MASNHKSSAP…KTGMKGPQRQ (90 aa)) form a basic region region. Low complexity predominate over residues 22–33 (GRPPSGIRPPSG). A compositionally biased stretch (gly residues) spans 50–59 (SRGGPLGTGG). At Arg-51 the chain carries Omega-N-methylarginine. Position 73 is a phosphothreonine (Thr-73). Positions 97 to 390 (YLGLLRSKIS…QELERKAQIE (294 aa)) form a coiled coil.

The protein belongs to the IFT74 family. In terms of assembly, component of the IFT complex B, at least composed of IFT20, IFT22, IFT25, IFT27, IFT46, IFT52, TRAF3IP1/IFT54, IFT57, IFT74, IFT80, IFT81, and IFT88. Interacts with IFT81; the interaction is direct: within the IFT complex B, IFT74 and IFT81 mediate the transport of tubulin within the cilium. Interacts (via basic region) with beta-tubulin (via acidic region); interaction is direct. Interacts with ARL13B and IFT88. Interacts (via the IFT74/IFT81 heterodimer) with RABL2B. Interacts with IFT57 and IFT70B. Predominantly expressed in testis, but also detected in other organs containing cilia-bearing cells, including lung, brain and kidney (at protein level).

The protein localises to the cell projection. The protein resides in the cilium. Its subcellular location is the cytoplasmic vesicle. It localises to the flagellum. It is found in the secretory vesicle. The protein localises to the acrosome. Its function is as follows. Component of the intraflagellar transport (IFT) complex B: together with IFT81, forms a tubulin-binding module that specifically mediates transport of tubulin within the cilium. Binds beta-tubulin via its basic region. Required for ciliogenesis. Essential for flagellogenesis during spermatogenesis. This chain is Intraflagellar transport protein 74 homolog (Ift74), found in Mus musculus (Mouse).